A 232-amino-acid polypeptide reads, in one-letter code: 2,3-bisphosphoglycerate-dependent phosphoglycerate mutase (232 aa).

Substrate-binding positions include 10 to 17, 23 to 24, R62, 89 to 92, K100, 116 to 117, and 185 to 186; these read RHGESIWN, TG, ERHY, RR, and GN. H11 acts as the Tele-phosphohistidine intermediate in catalysis. E89 acts as the Proton donor/acceptor in catalysis.

The protein belongs to the phosphoglycerate mutase family. BPG-dependent PGAM subfamily. As to quaternary structure, homodimer.

It carries out the reaction (2R)-2-phosphoglycerate = (2R)-3-phosphoglycerate. Its pathway is carbohydrate degradation; glycolysis; pyruvate from D-glyceraldehyde 3-phosphate: step 3/5. Its function is as follows. Catalyzes the interconversion of 2-phosphoglycerate and 3-phosphoglycerate. This is 2,3-bisphosphoglycerate-dependent phosphoglycerate mutase from Buchnera aphidicola subsp. Baizongia pistaciae (strain Bp).